The primary structure comprises 321 residues: Glucokinase (321 aa).

8–13 (GDVGGT) is a binding site for ATP.

Belongs to the bacterial glucokinase family.

The protein resides in the cytoplasm. The enzyme catalyses D-glucose + ATP = D-glucose 6-phosphate + ADP + H(+). The chain is Glucokinase from Shigella boydii serotype 18 (strain CDC 3083-94 / BS512).